A 220-amino-acid chain; its full sequence is Small ribosomal subunit protein uS2 (220 aa).

Belongs to the universal ribosomal protein uS2 family.

This Methanococcus maripaludis (strain C5 / ATCC BAA-1333) protein is Small ribosomal subunit protein uS2.